The following is a 147-amino-acid chain: Diaminohydroxyphosphoribosylamino-pyrimidine deaminase (147 aa).

The 122-residue stretch at 1–122 folds into the CMP/dCMP-type deaminase domain; that stretch reads MKDRFYMTRA…LYLRKKGISV (122 aa). Zn(2+) is bound at residue histidine 50. Catalysis depends on glutamate 52, which acts as the Proton donor. 2 residues coordinate Zn(2+): cysteine 75 and cysteine 84.

It belongs to the cytidine and deoxycytidylate deaminase family. Requires Zn(2+) as cofactor.

It catalyses the reaction 2,5-diamino-6-hydroxy-4-(5-phosphoribosylamino)-pyrimidine + H2O + H(+) = 5-amino-6-(5-phospho-D-ribosylamino)uracil + NH4(+). The protein operates within cofactor biosynthesis; riboflavin biosynthesis; 5-amino-6-(D-ribitylamino)uracil from GTP: step 2/4. In Buchnera aphidicola subsp. Schizaphis graminum (strain Sg), this protein is Diaminohydroxyphosphoribosylamino-pyrimidine deaminase (ribD1).